A 570-amino-acid chain; its full sequence is MFS-type transporter pigP (570 aa).

The tract at residues 14–54 (GMIKKAHPEQTPPDVSHEGDVATEKGDSDGVEQAAPTGPTD) is disordered. Basic and acidic residues predominate over residues 28 to 41 (VSHEGDVATEKGDS). Transmembrane regions (helical) follow at residues 65 to 85 (VMIM…TSII), 99 to 119 (LPDV…LVPL), 131 to 151 (WSFV…GVAT), 162 to 182 (VAGM…AGCV), 192 to 212 (GLLM…GGAF), 221 to 241 (CFYI…FVHI), and 263 to 283 (LVGF…LQYG). Residue Asn-290 is glycosylated (N-linked (GlcNAc...) asparagine). The next 7 helical transmembrane spans lie at 293–313 (VVIG…LWEW), 336–356 (VVYG…PIYF), 369–389 (VYIL…GALV), 392–412 (FGYY…GNGL), 425–445 (WIGY…MPII), 455–475 (LIPV…STFL), and 533–553 (VFYL…GMGW).

This sequence belongs to the major facilitator superfamily. TCR/Tet family.

Its subcellular location is the cell membrane. Its function is as follows. MFS-type transporter; part of the gene cluster that mediates the biosynthesis of azaphilone pigments (MonAzPs), very widely used as food colorant. In Monascus ruber (Mold), this protein is MFS-type transporter pigP.